Reading from the N-terminus, the 1196-residue chain is Jouberin (1196 aa).

A coiled-coil region spans residues 13–45; it reads KVRFEELLKTHSDLMREKKKLKKKLVRSEENIS. Position 45 is a phosphoserine (Ser45). Disordered stretches follow at residues 56–186, 215–242, and 254–327; these read MKET…EEDE, QLTY…KEVP, and ISGD…HEIT. A compositionally biased stretch (polar residues) spans 80 to 91; the sequence is DDVSAANTNNLK. The span at 92-101 shows a compositional bias: basic residues; the sequence is KSTRVTKNKL. Over residues 102 to 113 the composition is skewed to polar residues; the sequence is RNTQLATENPNG. 3 stretches are compositionally biased toward basic and acidic residues: residues 141-154, 166-179, and 224-233; these read LKPE…DSTH, DHQK…GREE, and LFHDDKLSSE. The interval 141-434 is interaction with HAP1; it reads LKPETPENKV…VFNENFPYLL (294 aa). The span at 300–309 shows a compositional bias: basic residues; sequence KPKKTKKKTK. WD repeat units follow at residues 607–649, 652–691, 695–735, 742–781, 797–837, 841–880, and 885–926; these read AGER…FMRE, GHLN…TNTF, PHPS…DSAI, VHKS…NDLE, EFKG…ARKF, ANYR…QVAM, and PFKS…AQQE. At Ser1002 the chain carries Phosphoserine. Residues 1051–1111 form the SH3 domain; that stretch reads DTAPTVVALY…PANHVASETL (61 aa). Residues 1115–1196 are disordered; the sequence is LPPEIKERSP…QAGRKVTLIE (82 aa). 2 stretches are compositionally biased toward basic and acidic residues: residues 1117 to 1136 and 1161 to 1182; these read PEIK…KIEK and THSE…DTRM. The residue at position 1123 (Ser1123) is a Phosphoserine.

As to quaternary structure, self-associates. Part of the tectonic-like complex (also named B9 complex). Interacts with MKS1. Interacts with NPHP1; probably as heterodimers and/or AHI1(2):NPHP1(2) heterotetramers. Interacts (via SH3 domain) with the dynamin GTPase DNM2. Interacts with HAP1; probably as AHI1(2):HAP1(2) heterotetramers. Interacts with RAB8A. Interacts with CEND1. Interacts with CTNNB1/beta-catenin. Interacts with SPATA7. In terms of tissue distribution, highly expressed in the most primitive normal hematopoietic cells. Expressed in brain, particularly in neurons that give rise to the crossing axons of the corticospinal tract and superior cerebellar peduncles. Expressed in kidney (renal collecting duct cells) (at protein level).

The protein resides in the cytoplasm. It localises to the cytoskeleton. Its subcellular location is the cilium basal body. It is found in the cell junction. The protein localises to the adherens junction. The protein resides in the microtubule organizing center. It localises to the centrosome. Its subcellular location is the centriole. In terms of biological role, involved in vesicle trafficking and required for ciliogenesis, formation of primary non-motile cilium, and recruitment of RAB8A to the basal body of primary cilium. Component of the tectonic-like complex, a complex localized at the transition zone of primary cilia and acting as a barrier that prevents diffusion of transmembrane proteins between the cilia and plasma membranes. Involved in neuronal differentiation. As a positive modulator of classical Wnt signaling, may play a crucial role in ciliary signaling during cerebellum embryonic development. This chain is Jouberin (AHI1), found in Homo sapiens (Human).